We begin with the raw amino-acid sequence, 88 residues long: Small ribosomal subunit protein uS15c (88 aa).

Belongs to the universal ribosomal protein uS15 family. As to quaternary structure, part of the 30S ribosomal subunit.

It is found in the plastid. It localises to the chloroplast. In Marchantia polymorpha (Common liverwort), this protein is Small ribosomal subunit protein uS15c (rps15).